A 264-amino-acid chain; its full sequence is S-adenosylmethionine decarboxylase proenzyme (264 aa).

The Schiff-base intermediate with substrate; via pyruvic acid role is filled by S113. S113 bears the Pyruvic acid (Ser); by autocatalysis mark. H118 functions as the Proton acceptor; for processing activity in the catalytic mechanism. The Proton donor; for catalytic activity role is filled by C141.

The protein belongs to the prokaryotic AdoMetDC family. Type 2 subfamily. In terms of assembly, heterooctamer of four alpha and four beta chains arranged as a tetramer of alpha/beta heterodimers. It depends on pyruvate as a cofactor. Is synthesized initially as an inactive proenzyme. Formation of the active enzyme involves a self-maturation process in which the active site pyruvoyl group is generated from an internal serine residue via an autocatalytic post-translational modification. Two non-identical subunits are generated from the proenzyme in this reaction, and the pyruvate is formed at the N-terminus of the alpha chain, which is derived from the carboxyl end of the proenzyme. The post-translation cleavage follows an unusual pathway, termed non-hydrolytic serinolysis, in which the side chain hydroxyl group of the serine supplies its oxygen atom to form the C-terminus of the beta chain, while the remainder of the serine residue undergoes an oxidative deamination to produce ammonia and the pyruvoyl group blocking the N-terminus of the alpha chain.

It carries out the reaction S-adenosyl-L-methionine + H(+) = S-adenosyl 3-(methylsulfanyl)propylamine + CO2. Its pathway is amine and polyamine biosynthesis; S-adenosylmethioninamine biosynthesis; S-adenosylmethioninamine from S-adenosyl-L-methionine: step 1/1. Functionally, catalyzes the decarboxylation of S-adenosylmethionine to S-adenosylmethioninamine (dcAdoMet), the propylamine donor required for the synthesis of the polyamines spermine and spermidine from the diamine putrescine. The chain is S-adenosylmethionine decarboxylase proenzyme from Xanthomonas campestris pv. campestris (strain B100).